The primary structure comprises 313 residues: MVDVIALGEPLIQFNSFNPGPLRFVNYFEKHVAGSELNFCIAVVRNHLSCSLIARVGNDEFGKNIIEYSRAQGIDTSHIKVDNESFTGIYFIQRGYPIPMKSELVYYRKGSAGSRLSPEDINENYVRNSRLVHSTGITLAISDNAKEAVIKAFELAKSRSLDTNIRPKLWSSLEKAKETILSILKKYDIEVLITDPDDTKILLDVTDPDEAYRKYKELGVKVLLYKLGSKGAIAYKDNVKAFKDAYKVPVEDPTGAGDAMAGTFVSLYLQGKDIEYSLAHGIAASTLVITVRGDNELTPTLEDAERFLNEFKT.

Residues glycine 34–asparagine 38, tyrosine 90, tyrosine 106–arginine 108, and arginine 166 contribute to the substrate site. ATP-binding positions include asparagine 164–arginine 166, lysine 226–glycine 231, and glycine 255–aspartate 258. Residues aspartate 258 and aspartate 294 each contribute to the substrate site. The Proton acceptor role is filled by aspartate 258.

Homohexamer; trimer of dimers.

It catalyses the reaction 2-dehydro-3-deoxy-D-gluconate + ATP = 2-dehydro-3-deoxy-6-phospho-D-gluconate + ADP + H(+). It carries out the reaction 2-dehydro-3-deoxy-D-galactonate + ATP = 2-dehydro-3-deoxy-6-phospho-D-galactonate + ADP + H(+). Its pathway is carbohydrate acid metabolism; 2-dehydro-3-deoxy-D-gluconate degradation; D-glyceraldehyde 3-phosphate and pyruvate from 2-dehydro-3-deoxy-D-gluconate: step 1/2. Its function is as follows. Involved in the degradation of glucose and galactose via the semi-phosphorylative Entner-Doudoroff pathway. Catalyzes the phosphorylation of 2-keto-3-deoxygluconate (KDG) and 2-keto-3-deoxygalactonate (KDGal) to produce 2-keto-3-deoxy-6-phosphogluconate (KDPG) and 2-keto-3-deoxy-6-phosphogalactonate (KDPGal), respectively. The polypeptide is 2-dehydro-3-deoxygluconokinase/2-dehydro-3-deoxygalactonokinase (kdgK) (Saccharolobus solfataricus (strain ATCC 35092 / DSM 1617 / JCM 11322 / P2) (Sulfolobus solfataricus)).